A 566-amino-acid polypeptide reads, in one-letter code: Liver carboxylesterase (566 aa).

The N-terminal stretch at 1–18 is a signal peptide; sequence MWLLPLVLTSLASSATWA. N-linked (GlcNAc...) asparagine glycosylation occurs at Asn-80. A disulfide bridge links Cys-88 with Cys-117. The active-site Acyl-ester intermediate is the Ser-222. A disulfide bridge connects residues Cys-274 and Cys-285. The active-site Charge relay system is Glu-354. Ser-379 carries the phosphoserine modification. Catalysis depends on His-467, which acts as the Charge relay system. A Prevents secretion from ER motif is present at residues 563–566; that stretch reads HAEL.

It belongs to the type-B carboxylesterase/lipase family.

Its subcellular location is the endoplasmic reticulum lumen. The catalysed reaction is a carboxylic ester + H2O = an alcohol + a carboxylate + H(+). Activated by CHAPS at concentrations of up to 130 mM, higher concentrations reduce activity. In the presence of CHAPS, activity is stimulated by non-ionic detergents. Inhibited by the esterase inhibitors diisopropylfluorophosphate and phenylmethylsulfonyl fluoride. Involved in the detoxification of xenobiotics and in the activation of ester and amide prodrugs. Active towards triacylglycerides containing short-chain fatty acids from C2 to C6, and 1(3)-monoacylglycerols containing fatty acids from C2 to C12. Inactive on long-chain triacylglycerols and diacylglycerol. Hydrolyzes aromatic and alkyl esters and vitamin A acetate. The hydrolysis rate depends upon the amino acid promoiety and the esterification site of the prodrug. Aromatic promoieties are favored, highest rates are observed with phenylalanyl progdrugs, hydrolysis of valyl and isoleucyl prodrugs is less efficient. With floxuridine prodrugs, activity is higher on 5' monoesters than on 3' monoesters. With gemcitabine prodrugs, activity is higher on 3' monoesters than on 5' monoesters. This chain is Liver carboxylesterase, found in Sus scrofa (Pig).